Here is a 91-residue protein sequence, read N- to C-terminus: Small ribosomal subunit protein uS15 (91 aa).

It belongs to the universal ribosomal protein uS15 family. As to quaternary structure, part of the 30S ribosomal subunit. Forms a bridge to the 50S subunit in the 70S ribosome, contacting the 23S rRNA.

In terms of biological role, one of the primary rRNA binding proteins, it binds directly to 16S rRNA where it helps nucleate assembly of the platform of the 30S subunit by binding and bridging several RNA helices of the 16S rRNA. Functionally, forms an intersubunit bridge (bridge B4) with the 23S rRNA of the 50S subunit in the ribosome. The protein is Small ribosomal subunit protein uS15 of Rickettsia typhi (strain ATCC VR-144 / Wilmington).